We begin with the raw amino-acid sequence, 204 residues long: UPF0056 membrane protein TC_0241 (204 aa).

Helical transmembrane passes span 8–28 (LTLL…FVAL), 46–66 (IFAL…FRLL), 68–88 (VSLP…AINM), 107–127 (IFYP…STLG), 138–158 (LVLG…FFSS), and 176–196 (FGIS…STAF).

The protein belongs to the UPF0056 (MarC) family.

The protein localises to the cell membrane. This Chlamydia muridarum (strain MoPn / Nigg) protein is UPF0056 membrane protein TC_0241.